The sequence spans 305 residues: UDP-3-O-acyl-N-acetylglucosamine deacetylase (305 aa).

3 residues coordinate Zn(2+): histidine 78, histidine 237, and aspartate 241. The active-site Proton donor is the histidine 264.

The protein belongs to the LpxC family. Zn(2+) serves as cofactor.

The enzyme catalyses a UDP-3-O-[(3R)-3-hydroxyacyl]-N-acetyl-alpha-D-glucosamine + H2O = a UDP-3-O-[(3R)-3-hydroxyacyl]-alpha-D-glucosamine + acetate. The protein operates within glycolipid biosynthesis; lipid IV(A) biosynthesis; lipid IV(A) from (3R)-3-hydroxytetradecanoyl-[acyl-carrier-protein] and UDP-N-acetyl-alpha-D-glucosamine: step 2/6. Its function is as follows. Catalyzes the hydrolysis of UDP-3-O-myristoyl-N-acetylglucosamine to form UDP-3-O-myristoylglucosamine and acetate, the committed step in lipid A biosynthesis. The polypeptide is UDP-3-O-acyl-N-acetylglucosamine deacetylase (Burkholderia pseudomallei (strain 668)).